Consider the following 345-residue polypeptide: Gibberellin receptor GID1A (345 aa).

Position 2 is an N-acetylalanine (A2). An Involved in the stabilization of the negatively charged intermediate by the formation of the oxyanion hole motif is present at residues 113–115 (HGG). Residues 115 to 116 (GS), Y127, and S191 contribute to the gibberellin A4 site. S116, Y127, S191, and F238 together coordinate gibberellin A3. S191 is an active-site residue. The active site involves D289. G320 is a binding site for gibberellin A4. G320 is a gibberellin A3 binding site.

The protein belongs to the 'GDXG' lipolytic enzyme family. Interacts (via N-terminus) with the DELLA proteins GAI, RGA, RGL1, RGL2 and RGL3 (via N-terminus) in a GA-dependent manner. In terms of tissue distribution, widely expressed.

It is found in the nucleus. In terms of biological role, functions as a soluble gibberellin (GA) receptor. GA is an essential hormone that regulates growth and development in plants. Binds with high affinity the biologically active gibberellin GA4, but has no affinity for the biologically inactive GAs. In response to GA, interacts with specific DELLA proteins, known as repressors of GA-induced growth, and targets them for degradation via proteasome. Seems to be required for GA signaling that controls root growth, seed germination, stem elongation and flower development. Partially redundant with GID1B and GID1C. The chain is Gibberellin receptor GID1A (GID1A) from Arabidopsis thaliana (Mouse-ear cress).